The primary structure comprises 254 residues: Persulfide dioxygenase ETHE1, mitochondrial (254 aa).

A mitochondrion-targeting transit peptide spans 1–7 (MAGSVLK). 2 positions are modified to phosphoserine: Ser14 and Ser19. An N6-acetyllysine; alternate modification is found at Lys32. Residue Lys32 is modified to N6-succinyllysine; alternate. Residue Lys66 is modified to N6-acetyllysine. Fe cation contacts are provided by His79, His135, and Asp154.

This sequence belongs to the metallo-beta-lactamase superfamily. Glyoxalase II family. In terms of assembly, homodimer. Monomer. Interacts with TST. May interact with RELA. It depends on Fe(2+) as a cofactor.

The protein resides in the cytoplasm. It is found in the nucleus. Its subcellular location is the mitochondrion matrix. The enzyme catalyses S-sulfanylglutathione + O2 + H2O = sulfite + glutathione + 2 H(+). With respect to regulation, glutathione increases enzyme activity. Functionally, sulfur dioxygenase that plays an essential role in hydrogen sulfide catabolism in the mitochondrial matrix. Hydrogen sulfide (H(2)S) is first oxidized by SQRDL, giving rise to cysteine persulfide residues. ETHE1 consumes molecular oxygen to catalyze the oxidation of the persulfide, once it has been transferred to a thiophilic acceptor, such as glutathione (R-SSH). Plays an important role in metabolic homeostasis in mitochondria by metabolizing hydrogen sulfide and preventing the accumulation of supraphysiological H(2)S levels that have toxic effects, due to the inhibition of cytochrome c oxidase. First described as a protein that can shuttle between the nucleus and the cytoplasm and suppress p53-induced apoptosis by sequestering the transcription factor RELA/NFKB3 in the cytoplasm and preventing its accumulation in the nucleus. This Bos taurus (Bovine) protein is Persulfide dioxygenase ETHE1, mitochondrial (ETHE1).